A 129-amino-acid polypeptide reads, in one-letter code: Phosphoribosyl-AMP cyclohydrolase (129 aa).

Aspartate 84 contacts Mg(2+). Zn(2+) is bound at residue cysteine 85. Residues aspartate 86 and aspartate 88 each coordinate Mg(2+). Residues cysteine 101 and cysteine 108 each contribute to the Zn(2+) site.

The protein belongs to the PRA-CH family. As to quaternary structure, homodimer. The cofactor is Mg(2+). Zn(2+) serves as cofactor.

The protein localises to the cytoplasm. It carries out the reaction 1-(5-phospho-beta-D-ribosyl)-5'-AMP + H2O = 1-(5-phospho-beta-D-ribosyl)-5-[(5-phospho-beta-D-ribosylamino)methylideneamino]imidazole-4-carboxamide. The protein operates within amino-acid biosynthesis; L-histidine biosynthesis; L-histidine from 5-phospho-alpha-D-ribose 1-diphosphate: step 3/9. Its function is as follows. Catalyzes the hydrolysis of the adenine ring of phosphoribosyl-AMP. The chain is Phosphoribosyl-AMP cyclohydrolase from Halobacterium salinarum (strain ATCC 700922 / JCM 11081 / NRC-1) (Halobacterium halobium).